The chain runs to 459 residues: tRNA modification GTPase MnmE (459 aa).

(6S)-5-formyl-5,6,7,8-tetrahydrofolate-binding residues include R23, E88, and R127. One can recognise a TrmE-type G domain in the interval 223–381 (GLNTVIVGKP…FKEVIKELFF (159 aa)). N233 serves as a coordination point for K(+). Residues 233–238 (NVGKSS), 252–258 (TDVPGTT), and 277–280 (DTAG) contribute to the GTP site. S237 serves as a coordination point for Mg(2+). K(+) is bound by residues T252, V254, and T257. T258 is a binding site for Mg(2+). K459 is a (6S)-5-formyl-5,6,7,8-tetrahydrofolate binding site.

The protein belongs to the TRAFAC class TrmE-Era-EngA-EngB-Septin-like GTPase superfamily. TrmE GTPase family. In terms of assembly, homodimer. Heterotetramer of two MnmE and two MnmG subunits. The cofactor is K(+).

Its subcellular location is the cytoplasm. Its function is as follows. Exhibits a very high intrinsic GTPase hydrolysis rate. Involved in the addition of a carboxymethylaminomethyl (cmnm) group at the wobble position (U34) of certain tRNAs, forming tRNA-cmnm(5)s(2)U34. The protein is tRNA modification GTPase MnmE of Clostridium novyi (strain NT).